The chain runs to 220 residues: Phosphatidylserine decarboxylase proenzyme (220 aa).

S189 functions as the Schiff-base intermediate with substrate; via pyruvic acid in the catalytic mechanism. S189 bears the Pyruvic acid (Ser); by autocatalysis mark.

Belongs to the phosphatidylserine decarboxylase family. PSD-A subfamily. Heterodimer of a large membrane-associated beta subunit and a small pyruvoyl-containing alpha subunit. Requires pyruvate as cofactor. In terms of processing, is synthesized initially as an inactive proenzyme. Formation of the active enzyme involves a self-maturation process in which the active site pyruvoyl group is generated from an internal serine residue via an autocatalytic post-translational modification. Two non-identical subunits are generated from the proenzyme in this reaction, and the pyruvate is formed at the N-terminus of the alpha chain, which is derived from the carboxyl end of the proenzyme. The post-translation cleavage follows an unusual pathway, termed non-hydrolytic serinolysis, in which the side chain hydroxyl group of the serine supplies its oxygen atom to form the C-terminus of the beta chain, while the remainder of the serine residue undergoes an oxidative deamination to produce ammonia and the pyruvoyl prosthetic group on the alpha chain.

The protein localises to the cell membrane. The catalysed reaction is a 1,2-diacyl-sn-glycero-3-phospho-L-serine + H(+) = a 1,2-diacyl-sn-glycero-3-phosphoethanolamine + CO2. Its pathway is phospholipid metabolism; phosphatidylethanolamine biosynthesis; phosphatidylethanolamine from CDP-diacylglycerol: step 2/2. Its function is as follows. Catalyzes the formation of phosphatidylethanolamine (PtdEtn) from phosphatidylserine (PtdSer). The sequence is that of Phosphatidylserine decarboxylase proenzyme from Pelobacter propionicus (strain DSM 2379 / NBRC 103807 / OttBd1).